We begin with the raw amino-acid sequence, 211 residues long: dITP/XTP pyrophosphatase (211 aa).

13-18 (THNPGK) lines the substrate pocket. Mg(2+) is bound by residues Asp45 and Asp74. Asp74 functions as the Proton acceptor in the catalytic mechanism. Substrate-binding positions include Ser75, 160–163 (FGYD), Lys183, and 195–196 (HR).

This sequence belongs to the HAM1 NTPase family. Homodimer. The cofactor is Mg(2+).

The enzyme catalyses XTP + H2O = XMP + diphosphate + H(+). The catalysed reaction is dITP + H2O = dIMP + diphosphate + H(+). It carries out the reaction ITP + H2O = IMP + diphosphate + H(+). Pyrophosphatase that catalyzes the hydrolysis of nucleoside triphosphates to their monophosphate derivatives, with a high preference for the non-canonical purine nucleotides XTP (xanthosine triphosphate), dITP (deoxyinosine triphosphate) and ITP. Seems to function as a house-cleaning enzyme that removes non-canonical purine nucleotides from the nucleotide pool, thus preventing their incorporation into DNA/RNA and avoiding chromosomal lesions. The chain is dITP/XTP pyrophosphatase from Bradyrhizobium diazoefficiens (strain JCM 10833 / BCRC 13528 / IAM 13628 / NBRC 14792 / USDA 110).